A 270-amino-acid polypeptide reads, in one-letter code: Peflin (270 aa).

A disordered region spans residues 1–97 (MSYQYGQGYS…YRQQGSAGNV (97 aa)). 5 tandem repeats follow at residues 22–30 (PPRAPYAGG), 44–54 (PPGQQYGGGSP), 62–70 (GPRAPYGGG), 72–81 (APGGPYGGYG), and 83–91 (PQGGPYRQQ). Residues 22–91 (PPRAPYAGGP…QPQGGPYRQQ (70 aa)) are 5 X 9 AA approximate tandem repeat of [AP]-P-G-G-P-Y-G-G-P-P. Low complexity-rich tracts occupy residues 26-47 (PYAG…PPGQ) and 55-66 (YGSYGQPGPRAP). The segment covering 67–84 (YGGGQAPGGPYGGYGQPQ) has biased composition (gly residues). EF-hand domains are found at residues 100–135 (GVNP…FNNS), 141–169 (TCIM…WTFL), 170–202 (QQWR…MGYN), 203–239 (LSPQ…LQSM), and 240–269 (TQAF…ITRL). Residues Asp113, Asp115, Ser117, Tyr119, and Glu124 each contribute to the Ca(2+) site. Asp180, Asp182, Ser184, Ser186, and Glu191 together coordinate Ca(2+).

As to quaternary structure, heterodimer; heterodimerizes (via the EF-hand 5) with pdcd6.

It localises to the cytoplasm. The protein localises to the endoplasmic reticulum. The protein resides in the membrane. Its subcellular location is the cytoplasmic vesicle. It is found in the COPII-coated vesicle membrane. Calcium-binding protein that acts as an adapter that bridges unrelated proteins or stabilizes weak protein-protein complexes in response to calcium. Acts as a negative regulator of ER-Golgi transport. The sequence is that of Peflin from Danio rerio (Zebrafish).